Reading from the N-terminus, the 590-residue chain is TPR repeat-containing protein PA4667 (590 aa).

TPR repeat units follow at residues 235 to 268, 269 to 302, 370 to 403, 405 to 438, and 508 to 541; these read VAPL…HPDD, KRVR…FPDD, LPAQ…QPDY, IQLY…YPED, and PAIL…YPDH.

The sequence is that of TPR repeat-containing protein PA4667 from Pseudomonas aeruginosa (strain ATCC 15692 / DSM 22644 / CIP 104116 / JCM 14847 / LMG 12228 / 1C / PRS 101 / PAO1).